The chain runs to 1445 residues: Protein HUA2-LIKE 1 (1445 aa).

The PWWP domain maps to 20–77 (LGDLVLAKVKGFPAWPAKIGQPEDWNQAPDPKKHFVQFYGTGEIGFVTPPDIQPFTSE). 7 disordered regions span residues 133 to 197 (KYLN…SPDP), 211 to 302 (TCTD…DLNI), 319 to 356 (FENE…SKRL), 409 to 439 (EHTS…SDSD), 460 to 491 (DDDD…ANAS), 641 to 685 (GIPK…TSTP), and 797 to 835 (LTPS…SLSG). Polar residues-rich tracts occupy residues 173-187 (QDSS…SPSS) and 211-225 (TCTD…NLVN). Composition is skewed to basic and acidic residues over residues 228-257 (RIIR…RAAT), 274-293 (GQDH…ESSD), and 331-350 (DESK…DQKQ). 2 stretches are compositionally biased toward polar residues: residues 660–673 (RVSS…NQRS) and 797–814 (LTPS…QAGT). Positions 838–979 (EAAISRDTFE…RYIGDLGASG (142 aa)) constitute a CID domain. Residues 1110-1203 (PATTCATELP…SLPLQPGFAP (94 aa)) form a disordered region. The segment covering 1124–1170 (GSPPLPHESPPSPPPQPPSSPPPPSSPPQLAPAPPPSDHCLPPPTAP) has biased composition (pro residues).

Expressed throughout young primordia, and vegetative and reproductive apices.

The protein resides in the nucleus. Probable transcription factor that acts with partial redundancy with HULK2 and HULK3. Plays diverse and essential roles in the control of plant development, physiology and flowering time. This is Protein HUA2-LIKE 1 from Arabidopsis thaliana (Mouse-ear cress).